The primary structure comprises 531 residues: Achacin (531 aa).

The first 22 residues, 1-22, serve as a signal peptide directing secretion; it reads MLLLNSALFILCLVCWLPGTSS. The propeptide occupies 23-29; the sequence is SRVLTRR. N112, N150, N308, and N392 each carry an N-linked (GlcNAc...) asparagine glycan.

To A.kurodai aplysianin-A. Homodimer. In terms of tissue distribution, collar tissue.

In terms of biological role, antibacterial glycoprotein. This chain is Achacin, found in Lissachatina fulica (Giant African land snail).